Consider the following 161-residue polypeptide: Allophycocyanin beta chain (161 aa).

Residue Asn-71 is modified to N4-methylasparagine. A (2R,3E)-phycocyanobilin-binding site is contributed by Cys-81.

It belongs to the phycobiliprotein family. Heterodimer of an alpha and a beta chain. In terms of processing, contains one covalently linked phycocyanobilin chromophore.

The protein localises to the plastid. It is found in the chloroplast thylakoid membrane. In terms of biological role, light-harvesting photosynthetic bile pigment-protein from the phycobiliprotein complex. Allophycocyanin has a maximum absorption at approximately 650 nanometers. This chain is Allophycocyanin beta chain (apcB), found in Pyropia haitanensis (Red seaweed).